We begin with the raw amino-acid sequence, 227 residues long: PKHD-type hydroxylase Bphy_5374 (227 aa).

Residues 79–179 enclose the Fe2OG dioxygenase domain; sequence KVYPPLFNRY…RVASFFWVQS (101 aa). Fe cation contacts are provided by His97, Asp99, and His160. Arg170 contacts 2-oxoglutarate.

Fe(2+) serves as cofactor. The cofactor is L-ascorbate.

This Paraburkholderia phymatum (strain DSM 17167 / CIP 108236 / LMG 21445 / STM815) (Burkholderia phymatum) protein is PKHD-type hydroxylase Bphy_5374.